Here is a 398-residue protein sequence, read N- to C-terminus: 1-deoxy-D-xylulose 5-phosphate reductoisomerase (398 aa).

Residues threonine 10, glycine 11, serine 12, isoleucine 13, lysine 37, asparagine 38, and asparagine 124 each coordinate NADPH. Residue lysine 125 coordinates 1-deoxy-D-xylulose 5-phosphate. Glutamate 126 provides a ligand contact to NADPH. Position 150 (aspartate 150) interacts with Mn(2+). The 1-deoxy-D-xylulose 5-phosphate site is built by serine 151, glutamate 152, serine 186, and histidine 209. A Mn(2+)-binding site is contributed by glutamate 152. Position 215 (glycine 215) interacts with NADPH. 4 residues coordinate 1-deoxy-D-xylulose 5-phosphate: serine 222, asparagine 227, lysine 228, and glutamate 231. Residue glutamate 231 coordinates Mn(2+).

It belongs to the DXR family. In terms of assembly, homodimer. Mg(2+) is required as a cofactor. Requires Mn(2+) as cofactor.

It catalyses the reaction 2-C-methyl-D-erythritol 4-phosphate + NADP(+) = 1-deoxy-D-xylulose 5-phosphate + NADPH + H(+). Its pathway is isoprenoid biosynthesis; isopentenyl diphosphate biosynthesis via DXP pathway; isopentenyl diphosphate from 1-deoxy-D-xylulose 5-phosphate: step 1/6. In terms of biological role, catalyzes the NADPH-dependent rearrangement and reduction of 1-deoxy-D-xylulose-5-phosphate (DXP) to 2-C-methyl-D-erythritol 4-phosphate (MEP). The sequence is that of 1-deoxy-D-xylulose 5-phosphate reductoisomerase from Buchnera aphidicola subsp. Acyrthosiphon pisum (strain 5A).